The sequence spans 368 residues: N-acetylneuraminate epimerase (368 aa).

The signal sequence occupies residues 1–19 (MNKTITALAILMASFAANA). Kelch repeat units follow at residues 40–84 (TVYI…AFID), 86–137 (NLYV…FVHN), 139–173 (KAYV…KINA), 174–219 (HYFD…VNKG), 222–265 (TWLI…VAGG), 287–336 (ENYQ…PWNN), and 338–367 (LLII…VTVQ). The Proton acceptor role is filled by Glu-228.

This sequence belongs to the NanM family. In terms of assembly, homodimer.

The protein localises to the periplasm. It carries out the reaction N-acetyl-alpha-neuraminate = N-acetyl-beta-neuraminate. Converts alpha-N-acetylneuranimic acid (Neu5Ac) to the beta-anomer, accelerating the equilibrium between the alpha- and beta-anomers. Probably facilitates sialidase-negative bacteria to compete successfully for limited amounts of extracellular Neu5Ac, which is likely taken up in the beta-anomer. In addition, the rapid removal of sialic acid from solution might be advantageous to the bacterium to damp down host responses. The chain is N-acetylneuraminate epimerase from Escherichia coli O157:H7.